A 385-amino-acid chain; its full sequence is Probable protein phosphatase 2C 38 (385 aa).

In terms of domain architecture, PPM-type phosphatase spans 46–357; it reads VAGEFSMSVI…DDITVIVVFL (312 aa). Serine 77 carries the post-translational modification Phosphoserine. Mn(2+)-binding residues include aspartate 88, glycine 89, aspartate 289, and aspartate 348.

It belongs to the PP2C family. As to quaternary structure, interacts with BIK1. Requires Mg(2+) as cofactor. Mn(2+) serves as cofactor. In terms of processing, phosphorylation at Ser-77 induces dissociation of PP2C38 from BIK1.

The protein resides in the cell membrane. It catalyses the reaction O-phospho-L-seryl-[protein] + H2O = L-seryl-[protein] + phosphate. The catalysed reaction is O-phospho-L-threonyl-[protein] + H2O = L-threonyl-[protein] + phosphate. Its function is as follows. May dephosphorylate and repress plasma membrane H(+)-ATPases (PM H(+)-ATPases, e.g. AHA1 and AHA2), thus influencing negatively plant growth and fitness. Involved in pathogen-associated molecular pattern (PAMP)-triggered immunity (PTI) signaling. Negatively regulates immune responses by controlling the phosphorylation and activation status of BIK1, a central rate-limiting kinase in PTI signaling. Impairs the phosphorylation of the NADPH oxidase RBOHD by BIK1. This chain is Probable protein phosphatase 2C 38, found in Arabidopsis thaliana (Mouse-ear cress).